The following is a 159-amino-acid chain: S-ribosylhomocysteine lyase (159 aa).

Fe cation-binding residues include His53, His57, and Cys124.

The protein belongs to the LuxS family. In terms of assembly, homodimer. Fe cation is required as a cofactor.

It carries out the reaction S-(5-deoxy-D-ribos-5-yl)-L-homocysteine = (S)-4,5-dihydroxypentane-2,3-dione + L-homocysteine. Its function is as follows. Involved in the synthesis of autoinducer 2 (AI-2) which is secreted by bacteria and is used to communicate both the cell density and the metabolic potential of the environment. The regulation of gene expression in response to changes in cell density is called quorum sensing. Catalyzes the transformation of S-ribosylhomocysteine (RHC) to homocysteine (HC) and 4,5-dihydroxy-2,3-pentadione (DPD). In Porphyromonas gingivalis (strain ATCC BAA-308 / W83), this protein is S-ribosylhomocysteine lyase.